The primary structure comprises 224 residues: MSISKWPASERPREKLLSMGAPALSDAELLAIFLRIGCVGKSAVDVARELLQQFGGLRPLLEASQKEFCRGRGLGMVKYVQLQAVLEMARRHIHADMKVGDLLSSPHLVRDYLRAQLRHHAREVFAVLFLDNQNRLIAYEELFQGTIDGANVYPREVVKQALAHNAAAVIFAHNHPSGLAEPSQADIRITRRLQEALGLVDIRVLDHLVVGDGELVSLAERGWL.

The 123-residue stretch at 102-224 (LLSSPHLVRD…LVSLAERGWL (123 aa)) folds into the MPN domain. Zn(2+) contacts are provided by histidine 173, histidine 175, and aspartate 186. The JAMM motif motif lies at 173–186 (HNHPSGLAEPSQAD).

The protein belongs to the UPF0758 family.

The protein is UPF0758 protein CJA_3522 of Cellvibrio japonicus (strain Ueda107) (Pseudomonas fluorescens subsp. cellulosa).